The following is a 168-amino-acid chain: Large ribosomal subunit protein bL9 (168 aa).

The interval 149-168 is disordered; that stretch reads QSFEEEPAPEAPAEEAEAAE. A compositionally biased stretch (acidic residues) spans 152 to 168; it reads EEEPAPEAPAEEAEAAE.

It belongs to the bacterial ribosomal protein bL9 family.

In terms of biological role, binds to the 23S rRNA. This Desulfovibrio desulfuricans (strain ATCC 27774 / DSM 6949 / MB) protein is Large ribosomal subunit protein bL9.